Here is a 240-residue protein sequence, read N- to C-terminus: Ribonuclease 3 (240 aa).

Residues 9 to 141 (VEEFQKKTGI…LLAAIYLDQG (133 aa)) form the RNase III domain. Mg(2+) is bound at residue glutamate 54. Residue aspartate 58 is part of the active site. Residues aspartate 127 and glutamate 130 each contribute to the Mg(2+) site. Glutamate 130 is an active-site residue. A DRBM domain is found at 168-237 (DYKTALQEIV…ARIAYEKLLK (70 aa)).

This sequence belongs to the ribonuclease III family. Homodimer. Requires Mg(2+) as cofactor.

It is found in the cytoplasm. It carries out the reaction Endonucleolytic cleavage to 5'-phosphomonoester.. Its function is as follows. Digests double-stranded RNA. Involved in the processing of primary rRNA transcript to yield the immediate precursors to the large and small rRNAs (23S and 16S). Processes some mRNAs, and tRNAs when they are encoded in the rRNA operon. Processes pre-crRNA and tracrRNA of type II CRISPR loci if present in the organism. The chain is Ribonuclease 3 from Thermotoga sp. (strain RQ2).